Consider the following 146-residue polypeptide: Ribonuclease VapC41 (146 aa).

A PINc domain is found at 3-142 (LCDTNIWLAL…FTQYGGIELR (140 aa)). Mg(2+) contacts are provided by aspartate 5 and aspartate 112.

The protein belongs to the PINc/VapC protein family. Mg(2+) serves as cofactor.

Toxic component of a type II toxin-antitoxin (TA) system. An RNase. Its toxic effect is neutralized by coexpression with cognate antitoxin VapB41. In Mycobacterium tuberculosis (strain CDC 1551 / Oshkosh), this protein is Ribonuclease VapC41.